Here is a 146-residue protein sequence, read N- to C-terminus: Hemoglobin subunit beta-1 (146 aa).

A Globin domain is found at 2–146 (HWTAEEKSAI…VAHALAHRYH (145 aa)). Heme b-binding residues include H63 and H92.

This sequence belongs to the globin family. As to quaternary structure, heterotetramer of two alpha chains and two beta chains. As to expression, red blood cells.

Its function is as follows. Involved in oxygen transport from the lung to the various peripheral tissues. In Drymarchon melanurus erebennus (Texas indigo snake), this protein is Hemoglobin subunit beta-1.